A 79-amino-acid chain; its full sequence is uncharacterized protein (79 aa).

Residues 1–18 form the signal peptide; the sequence is MQIKNIVAVLATVTAINA. The interval 24 to 44 is disordered; it reads PNATTPNATQPNATQPNTTLP. 4 N-linked (GlcNAc...) asparagine glycosylation sites follow: N25, N30, N35, and N40. G55 carries GPI-anchor amidated glycine lipidation. A propeptide spans 56-79 (removed in mature form); sequence EAVVNTMAAGAFGAAIAAGVAFLF.

Its subcellular location is the cell membrane. This is an uncharacterized protein from Saccharomyces cerevisiae (strain ATCC 204508 / S288c) (Baker's yeast).